A 63-amino-acid chain; its full sequence is Large ribosomal subunit protein bL28 (63 aa).

The protein belongs to the bacterial ribosomal protein bL28 family.

This chain is Large ribosomal subunit protein bL28, found in Mycoplasmopsis synoviae (strain 53) (Mycoplasma synoviae).